We begin with the raw amino-acid sequence, 296 residues long: Zinc finger CCCH-type antiviral protein 1-like (296 aa).

The residue at position 2 (Ala-2) is an N-acetylalanine. 2 consecutive C3H1-type zinc fingers follow at residues 111 to 136 (LCRRHMLGKCPHRDCWSTCSLSHDIH) and 198 to 219 (VCKSFVRGECPFQPCKRSHQLI).

The protein is Zinc finger CCCH-type antiviral protein 1-like (Zc3hav1l) of Mus musculus (Mouse).